The following is a 72-amino-acid chain: Translational regulator CsrA (72 aa).

The protein belongs to the CsrA/RsmA family. As to quaternary structure, homodimer; the beta-strands of each monomer intercalate to form a hydrophobic core, while the alpha-helices form wings that extend away from the core.

It is found in the cytoplasm. In terms of biological role, a translational regulator that binds mRNA to regulate translation initiation and/or mRNA stability. Usually binds in the 5'-UTR at or near the Shine-Dalgarno sequence preventing ribosome-binding, thus repressing translation. Its main target seems to be the major flagellin gene, while its function is anatagonized by FliW. The protein is Translational regulator CsrA of Clostridium botulinum (strain Okra / Type B1).